The primary structure comprises 435 residues: Glutamate-1-semialdehyde 2,1-aminomutase (435 aa).

The residue at position 266 (K266) is an N6-(pyridoxal phosphate)lysine.

Belongs to the class-III pyridoxal-phosphate-dependent aminotransferase family. HemL subfamily. In terms of assembly, homodimer. It depends on pyridoxal 5'-phosphate as a cofactor.

It localises to the cytoplasm. The catalysed reaction is (S)-4-amino-5-oxopentanoate = 5-aminolevulinate. The protein operates within porphyrin-containing compound metabolism; protoporphyrin-IX biosynthesis; 5-aminolevulinate from L-glutamyl-tRNA(Glu): step 2/2. The polypeptide is Glutamate-1-semialdehyde 2,1-aminomutase (Helicobacter hepaticus (strain ATCC 51449 / 3B1)).